Here is a 222-residue protein sequence, read N- to C-terminus: 7-cyano-7-deazaguanine synthase (222 aa).

An ATP-binding site is contributed by 8–18; the sequence is LSGGLDSATCL. Cys-187, Cys-197, Cys-200, and Cys-203 together coordinate Zn(2+).

Belongs to the QueC family. Zn(2+) is required as a cofactor.

The catalysed reaction is 7-carboxy-7-deazaguanine + NH4(+) + ATP = 7-cyano-7-deazaguanine + ADP + phosphate + H2O + H(+). The protein operates within purine metabolism; 7-cyano-7-deazaguanine biosynthesis. Catalyzes the ATP-dependent conversion of 7-carboxy-7-deazaguanine (CDG) to 7-cyano-7-deazaguanine (preQ(0)). This is 7-cyano-7-deazaguanine synthase from Alcanivorax borkumensis (strain ATCC 700651 / DSM 11573 / NCIMB 13689 / SK2).